The following is a 248-amino-acid chain: Phosphatidylglycerol--prolipoprotein diacylglyceryl transferase (248 aa).

3 consecutive transmembrane segments (helical) span residues 6–26 (FSIF…GVIL), 48–68 (ILVW…VIFE), and 84–104 (GGGL…YVIC). Arginine 130 is a binding site for a 1,2-diacyl-sn-glycero-3-phospho-(1'-sn-glycerol). 2 helical membrane-spanning segments follow: residues 187–207 (GQIT…VEGL) and 214–234 (IGAL…GVIL).

This sequence belongs to the Lgt family.

The protein localises to the cell membrane. The enzyme catalyses L-cysteinyl-[prolipoprotein] + a 1,2-diacyl-sn-glycero-3-phospho-(1'-sn-glycerol) = an S-1,2-diacyl-sn-glyceryl-L-cysteinyl-[prolipoprotein] + sn-glycerol 1-phosphate + H(+). Its pathway is protein modification; lipoprotein biosynthesis (diacylglyceryl transfer). Functionally, catalyzes the transfer of the diacylglyceryl group from phosphatidylglycerol to the sulfhydryl group of the N-terminal cysteine of a prolipoprotein, the first step in the formation of mature lipoproteins. This Finegoldia magna (strain ATCC 29328 / DSM 20472 / WAL 2508) (Peptostreptococcus magnus) protein is Phosphatidylglycerol--prolipoprotein diacylglyceryl transferase.